Here is a 118-residue protein sequence, read N- to C-terminus: T cell receptor gamma variable 5 (118 aa).

The N-terminal stretch at 1-17 (MRWALLVLLAFLSPASQ) is a signal peptide. In terms of domain architecture, Ig-like spans 18 to 118 (KSSNLEGGTK…GVYYCATWDR (101 aa)). A disulfide bond links cysteine 41 and cysteine 113. Asparagine 106 is a glycosylation site (N-linked (GlcNAc...) asparagine).

Gamma-delta TR is a heterodimer composed of a gamma and delta chain; disulfide-linked. The gamma-delta TR is associated with the transmembrane signaling CD3 coreceptor proteins following the stoichiometry: a single gamma-delta TR heterodimer associates with one CD3D-CD3E heterodimer, one CD3G-CD3E heterodimer and one CD247 homodimer forming a stable octameric structure. Upon activation, gamma-delta TR complex associates with FCER1G to initiate intracellular signaling.

Its subcellular location is the cell membrane. V region of the variable domain of T cell receptor (TR) gamma chain that participates in the antigen recognition. Gamma-delta TRs recognize a variety of self and foreign non-peptide antigens frequently expressed at the epithelial boundaries between the host and external environment, including endogenous lipids presented by MH-like protein CD1D and phosphoantigens presented by butyrophilin-like molecule BTN3A1. Upon antigen recognition induces rapid, innate-like immune responses involved in pathogen clearance and tissue repair. Binding of gamma-delta TR complex to antigen triggers phosphorylation of immunoreceptor tyrosine-based activation motifs (ITAMs) in the CD3 chains by the LCK and FYN kinases, allowing the recruitment, phosphorylation, and activation of ZAP70 that facilitates phosphorylation of the scaffolding proteins LCP2 and LAT. This lead to the formation of a supramolecular signalosome that recruits the phospholipase PLCG1, resulting in calcium mobilization and ERK activation, ultimately leading to T cell expansion and differentiation into effector cells. Gamma-delta TRs are produced through somatic rearrangement of a limited repertoire of variable (V), diversity (D), and joining (J) genes. The potential diversity of gamma-delta TRs is conferred by the unique ability to rearrange (D) genes in tandem and to utilize all three reading frames. The combinatorial diversity is considerably increased by the sequence exonuclease trimming and random nucleotide (N) region additions which occur during the V-(D)-J rearrangements. In Homo sapiens (Human), this protein is T cell receptor gamma variable 5.